The following is a 58-amino-acid chain: Keratin-associated protein 19-6 (58 aa).

This sequence belongs to the KRTAP type 19 family. Interacts with hair keratins.

Functionally, in the hair cortex, hair keratin intermediate filaments are embedded in an interfilamentous matrix, consisting of hair keratin-associated proteins (KRTAP), which are essential for the formation of a rigid and resistant hair shaft through their extensive disulfide bond cross-linking with abundant cysteine residues of hair keratins. The matrix proteins include the high-sulfur and high-glycine-tyrosine keratins. This chain is Keratin-associated protein 19-6 (KRTAP19-6), found in Homo sapiens (Human).